The sequence spans 414 residues: Serine/threonine transporter SstT (414 aa).

Topologically, residues 2-15 (TTQHSPGLFRRLAH) are cytoplasmic. Residues 16-36 (GSLVKQILAGLILGILLAWIS) traverse the membrane as a helical segment. The Periplasmic portion of the chain corresponds to 37–45 (KPAAEAVGL). Residues 46–66 (LGTLFVGALKAVAPILVLMLV) traverse the membrane as a helical segment. The Cytoplasmic portion of the chain corresponds to 67–83 (MASIANHQHGQKTNIRP). The helical transmembrane segment at 84–104 (ILFLYLLGTFSAALAAVIFSF) threads the bilayer. Residues 105 to 142 (AFPSTLHLSSSAGDISPPSGIVEVMRGLVMSMVSNPID) are Periplasmic-facing. A helical membrane pass occupies residues 143-163 (ALLKGNYIGILVWAIGLGFAL). The Cytoplasmic portion of the chain corresponds to 164–179 (RHGNETTKNLVNDMSN). Residues 180-200 (AVTFMVKLVIHFAPIGIFGLV) traverse the membrane as a helical segment. The Periplasmic segment spans residues 201–217 (SSTLATTGFSTLWGYAQ). The chain crosses the membrane as a helical span at residues 218-238 (LLVVLVGCMLLVALVVNPLLV). Over 239 to 299 (WWKIRRNPFP…VSIPLGATIN (61 aa)) the chain is Cytoplasmic. A helical membrane pass occupies residues 300–320 (MAGAAITITVLTLAAVNTLGI). At 321 to 331 (PVDLPTALLLS) the chain is on the periplasmic side. Residues 332-352 (VVASLCACGASGVAGGSLLLI) traverse the membrane as a helical segment. Over 353-414 (PLACNMFGIS…DRLANSALRN (62 aa)) the chain is Cytoplasmic.

This sequence belongs to the dicarboxylate/amino acid:cation symporter (DAACS) (TC 2.A.23) family.

The protein resides in the cell inner membrane. It catalyses the reaction L-serine(in) + Na(+)(in) = L-serine(out) + Na(+)(out). The catalysed reaction is L-threonine(in) + Na(+)(in) = L-threonine(out) + Na(+)(out). In terms of biological role, involved in the import of serine and threonine into the cell, with the concomitant import of sodium (symport system). The polypeptide is Serine/threonine transporter SstT (Escherichia coli (strain UTI89 / UPEC)).